Here is a 369-residue protein sequence, read N- to C-terminus: Maltose/maltodextrin import ATP-binding protein MalK (369 aa).

The ABC transporter domain maps to V4–I234. Residue G36–S43 participates in ATP binding.

The protein belongs to the ABC transporter superfamily. Maltooligosaccharide importer (TC 3.A.1.1.1) family. The complex is composed of two ATP-binding proteins (MalK), two transmembrane proteins (MalG and MalK) and a solute-binding protein (MalE).

The protein resides in the cell inner membrane. It carries out the reaction D-maltose(out) + ATP + H2O = D-maltose(in) + ADP + phosphate + H(+). Its function is as follows. Part of the ABC transporter complex MalEFGK involved in maltose/maltodextrin import. Responsible for energy coupling to the transport system. The sequence is that of Maltose/maltodextrin import ATP-binding protein MalK from Salmonella paratyphi A (strain ATCC 9150 / SARB42).